The following is a 457-amino-acid chain: Bifunctional protein GlmU (457 aa).

Residues 1–228 are pyrophosphorylase; the sequence is MEELVSVILA…SEEIIGVNSR (228 aa). UDP-N-acetyl-alpha-D-glucosamine-binding positions include 9-12, Lys-23, Gln-73, and 78-79; these read LAAG and GT. Mg(2+) is bound at residue Asp-102. UDP-N-acetyl-alpha-D-glucosamine contacts are provided by Gly-139, Glu-154, Asn-169, and Asn-226. Residue Asn-226 participates in Mg(2+) binding. The interval 229-249 is linker; it reads VQLSNAEKVMRRRINEKHMEN. An N-acetyltransferase region spans residues 250-457; that stretch reads GVTIIDPDST…VEERIKKGRL (208 aa). Residues Arg-331 and Lys-349 each coordinate UDP-N-acetyl-alpha-D-glucosamine. His-361 (proton acceptor) is an active-site residue. 2 residues coordinate UDP-N-acetyl-alpha-D-glucosamine: Tyr-364 and Asn-375. Acetyl-CoA contacts are provided by residues 384-385, Ala-421, and Arg-438; that span reads NY.

In the N-terminal section; belongs to the N-acetylglucosamine-1-phosphate uridyltransferase family. It in the C-terminal section; belongs to the transferase hexapeptide repeat family. In terms of assembly, homotrimer. Mg(2+) serves as cofactor.

The protein resides in the cytoplasm. The enzyme catalyses alpha-D-glucosamine 1-phosphate + acetyl-CoA = N-acetyl-alpha-D-glucosamine 1-phosphate + CoA + H(+). It catalyses the reaction N-acetyl-alpha-D-glucosamine 1-phosphate + UTP + H(+) = UDP-N-acetyl-alpha-D-glucosamine + diphosphate. It participates in nucleotide-sugar biosynthesis; UDP-N-acetyl-alpha-D-glucosamine biosynthesis; N-acetyl-alpha-D-glucosamine 1-phosphate from alpha-D-glucosamine 6-phosphate (route II): step 2/2. Its pathway is nucleotide-sugar biosynthesis; UDP-N-acetyl-alpha-D-glucosamine biosynthesis; UDP-N-acetyl-alpha-D-glucosamine from N-acetyl-alpha-D-glucosamine 1-phosphate: step 1/1. It functions in the pathway bacterial outer membrane biogenesis; LPS lipid A biosynthesis. In terms of biological role, catalyzes the last two sequential reactions in the de novo biosynthetic pathway for UDP-N-acetylglucosamine (UDP-GlcNAc). The C-terminal domain catalyzes the transfer of acetyl group from acetyl coenzyme A to glucosamine-1-phosphate (GlcN-1-P) to produce N-acetylglucosamine-1-phosphate (GlcNAc-1-P), which is converted into UDP-GlcNAc by the transfer of uridine 5-monophosphate (from uridine 5-triphosphate), a reaction catalyzed by the N-terminal domain. This chain is Bifunctional protein GlmU, found in Caldanaerobacter subterraneus subsp. tengcongensis (strain DSM 15242 / JCM 11007 / NBRC 100824 / MB4) (Thermoanaerobacter tengcongensis).